The chain runs to 300 residues: Protoheme IX farnesyltransferase (300 aa).

A run of 9 helical transmembrane segments spans residues 24-44 (VTQL…PGMV), 46-66 (WHVL…AFAI), 94-114 (PQIL…LYTF), 118-138 (LTMW…TLLL), 146-166 (IVIG…AVTG), 172-192 (AWIL…VLAL), 217-237 (LHIL…FISG), 239-259 (SGAV…AYAW), and 278-298 (IVYL…RPLL).

The protein belongs to the UbiA prenyltransferase family. Protoheme IX farnesyltransferase subfamily.

It is found in the cell inner membrane. It carries out the reaction heme b + (2E,6E)-farnesyl diphosphate + H2O = Fe(II)-heme o + diphosphate. The protein operates within porphyrin-containing compound metabolism; heme O biosynthesis; heme O from protoheme: step 1/1. In terms of biological role, converts heme B (protoheme IX) to heme O by substitution of the vinyl group on carbon 2 of heme B porphyrin ring with a hydroxyethyl farnesyl side group. This Burkholderia cenocepacia (strain HI2424) protein is Protoheme IX farnesyltransferase.